The sequence spans 623 residues: tRNA uridine 5-carboxymethylaminomethyl modification enzyme MnmG (623 aa).

Residue 12–17 coordinates FAD; sequence GAGHAG. Residue 272-286 coordinates NAD(+); the sequence is GPRYCPSIEDKINRF.

Belongs to the MnmG family. In terms of assembly, homodimer. Heterotetramer of two MnmE and two MnmG subunits. FAD is required as a cofactor.

The protein resides in the cytoplasm. Functionally, NAD-binding protein involved in the addition of a carboxymethylaminomethyl (cmnm) group at the wobble position (U34) of certain tRNAs, forming tRNA-cmnm(5)s(2)U34. This is tRNA uridine 5-carboxymethylaminomethyl modification enzyme MnmG from Christiangramia forsetii (strain DSM 17595 / CGMCC 1.15422 / KT0803) (Gramella forsetii).